We begin with the raw amino-acid sequence, 608 residues long: Formate hydrogenlyase subunit 3 (608 aa).

12 helical membrane-spanning segments follow: residues 10–26 (GVAW…LFSF), 44–67 (LYTA…LSLV), 76–93 (LNAI…FVSL), 116–140 (AAAV…MALC), 153–173 (LWFA…WLLW), 197–218 (IWLL…HGWV), 229–251 (AAAL…LSLL), 258–280 (WWGI…YALV), 296–312 (IGII…GIAL), 416–440 (LAVG…VTFL), 453–476 (CAPL…GVAA), and 502–521 (MITL…MAIC).

It belongs to the complex I subunit 4 family. FHL comprises of a formate dehydrogenase, unidentified electron carriers and a hydrogenase (isoenzyme 3). In this non-energy conserving pathway molecular hydrogen and carbodioxide from formate are released.

The protein localises to the cell inner membrane. The polypeptide is Formate hydrogenlyase subunit 3 (hycC) (Escherichia coli (strain K12)).